The sequence spans 366 residues: 3-dehydroquinate synthase (366 aa).

Residues 73 to 78, 107 to 111, 131 to 132, lysine 144, and lysine 153 each bind NAD(+); these read DGERAK, GVVGD, and TT. The Zn(2+) site is built by glutamate 186, histidine 249, and histidine 266.

The protein belongs to the sugar phosphate cyclases superfamily. Dehydroquinate synthase family. It depends on Co(2+) as a cofactor. Zn(2+) is required as a cofactor. Requires NAD(+) as cofactor.

The protein localises to the cytoplasm. The enzyme catalyses 7-phospho-2-dehydro-3-deoxy-D-arabino-heptonate = 3-dehydroquinate + phosphate. It participates in metabolic intermediate biosynthesis; chorismate biosynthesis; chorismate from D-erythrose 4-phosphate and phosphoenolpyruvate: step 2/7. Catalyzes the conversion of 3-deoxy-D-arabino-heptulosonate 7-phosphate (DAHP) to dehydroquinate (DHQ). This is 3-dehydroquinate synthase from Koribacter versatilis (strain Ellin345).